A 279-amino-acid chain; its full sequence is Protein FAM151B (279 aa).

It belongs to the menorin family.

Functionally, essential for survival of retinal photoreceptor cells. This chain is Protein FAM151B (Fam151b), found in Mus musculus (Mouse).